Reading from the N-terminus, the 341-residue chain is tRNA N6-adenosine threonylcarbamoyltransferase (341 aa).

H111 and H115 together coordinate Fe cation. Substrate-binding positions include 134 to 138, D167, G180, and N270; that span reads LVSGG. D298 lines the Fe cation pocket.

This sequence belongs to the KAE1 / TsaD family. Requires Fe(2+) as cofactor.

The protein localises to the cytoplasm. The enzyme catalyses L-threonylcarbamoyladenylate + adenosine(37) in tRNA = N(6)-L-threonylcarbamoyladenosine(37) in tRNA + AMP + H(+). Functionally, required for the formation of a threonylcarbamoyl group on adenosine at position 37 (t(6)A37) in tRNAs that read codons beginning with adenine. Is involved in the transfer of the threonylcarbamoyl moiety of threonylcarbamoyl-AMP (TC-AMP) to the N6 group of A37, together with TsaE and TsaB. TsaD likely plays a direct catalytic role in this reaction. The chain is tRNA N6-adenosine threonylcarbamoyltransferase from Thiobacillus denitrificans (strain ATCC 25259 / T1).